A 476-amino-acid chain; its full sequence is UDP-N-acetylmuramoylalanine--D-glutamate ligase (476 aa).

122 to 128 (GSNAKST) contacts ATP.

This sequence belongs to the MurCDEF family.

The protein localises to the cytoplasm. It catalyses the reaction UDP-N-acetyl-alpha-D-muramoyl-L-alanine + D-glutamate + ATP = UDP-N-acetyl-alpha-D-muramoyl-L-alanyl-D-glutamate + ADP + phosphate + H(+). Its pathway is cell wall biogenesis; peptidoglycan biosynthesis. Functionally, cell wall formation. Catalyzes the addition of glutamate to the nucleotide precursor UDP-N-acetylmuramoyl-L-alanine (UMA). The polypeptide is UDP-N-acetylmuramoylalanine--D-glutamate ligase (Psychrobacter arcticus (strain DSM 17307 / VKM B-2377 / 273-4)).